The chain runs to 391 residues: Tumor susceptibility gene 101 protein (391 aa).

Alanine 2 is modified (N-acetylalanine). One can recognise a UEV domain in the interval 2–145; the sequence is AVSESQLKKM…GEEPPVFSRP (144 aa). The interval 159–163 is interaction with CEP55; that stretch reads PPNTS. Residues 197–220 form a disordered region; sequence YPATTSSQYPSQPPVTTVGPSRDG. Residues 200-215 show a composition bias toward polar residues; that stretch reads TTSSQYPSQPPVTTVG. Position 221 is a phosphothreonine (threonine 221). Residues 237 to 317 are a coiled coil; it reads DKLRWRMKEE…NQSENNDIDE (81 aa). The PTAP/PSAP motif signature appears at 321 to 324; it reads PTAP. The SB domain occupies 323–391; the sequence is APLYKQILNL…RKTAGLSDLY (69 aa).

It belongs to the ubiquitin-conjugating enzyme family. UEV subfamily. In terms of assembly, component of the ESCRT-I complex (endosomal sorting complex required for transport I) which consists of TSG101, VPS28, a VPS37 protein (VPS37A to -D) and MVB12A or MVB12B in a 1:1:1:1 stoichiometry. Interacts with VPS37A, VPS37B and VPS37C. Component of an ESCRT-I complex (endosomal sorting complex required for transport I) which consists of TSG101, VPS28, VPS37A and UBAP1 in a 1:1:1:1 stoichiometry. Interacts with DMAP1. Interacts with GMCL. Interacts with ubiquitin, stathmin and AATF. Interacts with HGS; the interaction mediates the association with the ESCRT-0 complex. Interacts with GGA1 and GGA3. Interacts (via UEV domain) with PDCD6IP/AIP1. Interacts with VPS28, SNF8 and VPS36. Self-associates. Interacts with MVB12A; the association appears to be mediated by the TSG101-VPS37 binary subcomplex. Interacts with VPS37D. Interacts with LRSAM1. Interacts with CEP55; the interaction is required for cytokinesis. Interacts with PDCD6. Interacts with LITAF. Interacts with murine leukemia virus Gag polyprotein (via PSAP motif). Interacts with MGRN1. Interacts with ARRDC1; recruits TSG101 to the plasma membrane. Monoubiquitinated at multiple sites by LRSAM1 and by MGRN1. Ubiquitination inactivates it, possibly by regulating its shuttling between an active membrane-bound protein and an inactive soluble form. Ubiquitination by MGRN1 requires the presence of UBE2D1. As to expression, ubiquitous. Higher expression in brain and mammary gland. Lower expression in liver and tumoral tissues.

The protein localises to the cytoplasm. It localises to the early endosome membrane. Its subcellular location is the late endosome membrane. It is found in the cytoskeleton. The protein resides in the microtubule organizing center. The protein localises to the centrosome. It localises to the midbody. Its subcellular location is the midbody ring. It is found in the nucleus. Its function is as follows. Component of the ESCRT-I complex, a regulator of vesicular trafficking process. Binds to ubiquitinated cargo proteins and is required for the sorting of endocytic ubiquitinated cargos into multivesicular bodies (MVBs). Mediates the association between the ESCRT-0 and ESCRT-I complex. Required for completion of cytokinesis; the function requires CEP55. May be involved in cell growth and differentiation. Acts as a negative growth regulator. Required for the exosomal release of SDCBP, CD63 and syndecan. It may also play a role in the extracellular release of microvesicles that differ from the exosomes. This is Tumor susceptibility gene 101 protein (Tsg101) from Mus musculus (Mouse).